A 725-amino-acid chain; its full sequence is Polyribonucleotide nucleotidyltransferase (725 aa).

Mg(2+) contacts are provided by Asp487 and Asp493. The KH domain maps to 554-613; that stretch reads PRIETMQIPTDKIREVIGTGGKVIREIVEKTGAKIDIQDTGVVKIASSDGKAIKAAYNWI. In terms of domain architecture, S1 motif spans 623–691; the sequence is GMIYDGTVVK…ERGKIRLSMK (69 aa). Residues 699 to 725 are disordered; that stretch reads EDLTEKLKAEREADRNRERQARQSAGE. Over residues 701–719 the composition is skewed to basic and acidic residues; sequence LTEKLKAEREADRNRERQA.

The protein belongs to the polyribonucleotide nucleotidyltransferase family. Mg(2+) is required as a cofactor.

It localises to the cytoplasm. It catalyses the reaction RNA(n+1) + phosphate = RNA(n) + a ribonucleoside 5'-diphosphate. In terms of biological role, involved in mRNA degradation. Catalyzes the phosphorolysis of single-stranded polyribonucleotides processively in the 3'- to 5'-direction. This is Polyribonucleotide nucleotidyltransferase from Methylobacterium sp. (strain 4-46).